The chain runs to 364 residues: SVP1-like protein 2 (364 aa).

WD repeat units follow at residues 173-213 (AHDS…KICE) and 218-257 (YQHT…NTIR).

This sequence belongs to the WD repeat PROPPIN family.

The protein resides in the vacuole membrane. Its subcellular location is the cytoplasmic vesicle membrane. The protein localises to the preautophagosomal structure membrane. Involved in mitochondrial or peroxisomal functions and amino acid signaling pathways. This Schizosaccharomyces pombe (strain 972 / ATCC 24843) (Fission yeast) protein is SVP1-like protein 2 (hsv2).